Here is a 539-residue protein sequence, read N- to C-terminus: 4-coumarate--CoA ligase 5 (539 aa).

ATP contacts are provided by serine 185, serine 186, glycine 187, threonine 188, threonine 189, and lysine 193. Tyrosine 235 and serine 239 together coordinate (E)-4-coumaroyl-AMP. Residue arginine 256 coordinates CoA. The SBD1 stretch occupies residues 258–327; that stretch reads DTVKMLQLVE…AKLPNAVLGQ (70 aa). The (E)-4-coumaroyl-AMP site is built by alanine 305, glutamine 327, glycine 328, threonine 332, and methionine 340. Positions 327, 328, and 332 each coordinate ATP. The interval 328–395 is SBD2; the sequence is GYGMTEAGPV…IRGKQIMKGY (68 aa). ATP is bound by residues aspartate 416 and arginine 431. Residues lysine 433 and lysine 437 each contribute to the (E)-4-coumaroyl-AMP site. Residues lysine 439 and glycine 440 each coordinate CoA. Lysine 522 is a binding site for ATP.

This sequence belongs to the ATP-dependent AMP-binding enzyme family. Mg(2+) is required as a cofactor. Expressed in roots, stems, leaf blades, leaf sheaths and spikelets.

It carries out the reaction (E)-ferulate + ATP + CoA = (E)-feruloyl-CoA + AMP + diphosphate. It catalyses the reaction (E)-4-coumarate + ATP + CoA = (E)-4-coumaroyl-CoA + AMP + diphosphate. The catalysed reaction is (E)-sinapate + ATP + CoA = (E)-sinapoyl-CoA + AMP + diphosphate. The enzyme catalyses (E)-caffeate + ATP + CoA = (E)-caffeoyl-CoA + AMP + diphosphate. It carries out the reaction (E)-cinnamate + ATP + CoA = (E)-cinnamoyl-CoA + AMP + diphosphate. It catalyses the reaction (E)-ferulate + ATP + H(+) = (E)-feruloyl-AMP + diphosphate. The catalysed reaction is (E)-feruloyl-AMP + CoA = (E)-feruloyl-CoA + AMP + H(+). The enzyme catalyses (E)-4-coumarate + ATP + H(+) = (E)-4-coumaroyl-AMP + diphosphate. It carries out the reaction (E)-4-coumaroyl-AMP + CoA = (E)-4-coumaroyl-CoA + AMP + H(+). It catalyses the reaction (E)-sinapate + ATP + H(+) = (E)-sinapoyl-AMP + diphosphate. The catalysed reaction is (E)-sinapoyl-AMP + CoA = (E)-sinapoyl-CoA + AMP + H(+). The enzyme catalyses (E)-caffeate + ATP + H(+) = (E)-caffeoyl-AMP + diphosphate. It carries out the reaction (E)-caffeoyl-AMP + CoA = (E)-caffeoyl-CoA + AMP + H(+). It functions in the pathway phytoalexin biosynthesis; 3,4',5-trihydroxystilbene biosynthesis; 3,4',5-trihydroxystilbene from trans-4-coumarate: step 1/2. Its function is as follows. Involved in the phenylpropanoid metabolism by mediating the activation of a number of hydroxycinnamates for the biosynthesis of monolignols and other phenolic secondary metabolites. Catalyzes the formation of CoA esters of cinnamate, 4-coumarate, caffeate and ferulate. Is also able to convert sinapate to its corresponding CoA ester, a reaction that is rarely observed in 4CL catalysis. Is more efficient with substrates in the following order: ferulate &gt; 4-coumarate &gt; sinapate &gt; caffeate &gt; cinnamate. Follows a two-step reaction mechanism, wherein the carboxylate substrate first undergoes adenylation by ATP, followed by a thioesterification in the presence of CoA to yield the final CoA thioesters. This is 4-coumarate--CoA ligase 5 from Oryza sativa subsp. japonica (Rice).